Reading from the N-terminus, the 180-residue chain is DNA-directed RNA polymerase subunit omega (180 aa).

Positions 100-180 (ISKSGTPILP…NSDDSETTNS (81 aa)) are disordered. Composition is skewed to acidic residues over residues 137–151 (EVDV…DEET) and 159–180 (AEAE…TTNS).

Belongs to the RNA polymerase subunit omega family. In terms of assembly, the RNAP catalytic core consists of 2 alpha, 1 beta, 1 beta' and 1 omega subunit. When a sigma factor is associated with the core the holoenzyme is formed, which can initiate transcription.

The catalysed reaction is RNA(n) + a ribonucleoside 5'-triphosphate = RNA(n+1) + diphosphate. Functionally, promotes RNA polymerase assembly. Latches the N- and C-terminal regions of the beta' subunit thereby facilitating its interaction with the beta and alpha subunits. The polypeptide is DNA-directed RNA polymerase subunit omega (Pelagibacter ubique (strain HTCC1062)).